A 106-amino-acid chain; its full sequence is Tubulin-specific chaperone A (106 aa).

Serine 94 carries the phosphoserine modification.

Belongs to the TBCA family.

Its subcellular location is the cytoplasm. The protein localises to the cytoskeleton. Functionally, tubulin-folding protein; involved in the early step of the tubulin folding pathway. The polypeptide is Tubulin-specific chaperone A (RBL2) (Saccharomyces cerevisiae (strain ATCC 204508 / S288c) (Baker's yeast)).